We begin with the raw amino-acid sequence, 120 residues long: NAD(P)H-quinone oxidoreductase subunit 3, chloroplastic (120 aa).

Transmembrane regions (helical) follow at residues 9 to 29 (IFWAFLIISSAIPVLAFFISG), 64 to 84 (MFALVFVVFDVETVFLYPWAM), and 88 to 108 (VLGVSAFIEAFIFVLILILGL).

The protein belongs to the complex I subunit 3 family. As to quaternary structure, NDH is composed of at least 16 different subunits, 5 of which are encoded in the nucleus.

The protein resides in the plastid. It is found in the chloroplast thylakoid membrane. The enzyme catalyses a plastoquinone + NADH + (n+1) H(+)(in) = a plastoquinol + NAD(+) + n H(+)(out). It carries out the reaction a plastoquinone + NADPH + (n+1) H(+)(in) = a plastoquinol + NADP(+) + n H(+)(out). In terms of biological role, NDH shuttles electrons from NAD(P)H:plastoquinone, via FMN and iron-sulfur (Fe-S) centers, to quinones in the photosynthetic chain and possibly in a chloroplast respiratory chain. The immediate electron acceptor for the enzyme in this species is believed to be plastoquinone. Couples the redox reaction to proton translocation, and thus conserves the redox energy in a proton gradient. The sequence is that of NAD(P)H-quinone oxidoreductase subunit 3, chloroplastic from Barbarea verna (Land cress).